Consider the following 202-residue polypeptide: Recombination protein RecR (202 aa).

The segment at 56–71 (CVVCGTVSDGELCRIC) adopts a C4-type zinc-finger fold. In terms of domain architecture, Toprim spans 79–179 (TMICVVEEPK…TVTRLASGLP (101 aa)).

This sequence belongs to the RecR family.

May play a role in DNA repair. It seems to be involved in an RecBC-independent recombinational process of DNA repair. It may act with RecF and RecO. This chain is Recombination protein RecR, found in Nocardia farcinica (strain IFM 10152).